The primary structure comprises 190 residues: Large ribosomal subunit protein bL9 (190 aa).

This sequence belongs to the bacterial ribosomal protein bL9 family.

Functionally, binds to the 23S rRNA. The chain is Large ribosomal subunit protein bL9 from Methylobacterium radiotolerans (strain ATCC 27329 / DSM 1819 / JCM 2831 / NBRC 15690 / NCIMB 10815 / 0-1).